Here is a 315-residue protein sequence, read N- to C-terminus: Transposase for insertion sequence element IS640 (315 aa).

Residues 5 to 66 form the HTH IS21-type domain; the sequence is EDFYMIKQMR…PFMDYIDMRL (62 aa). An Integrase catalytic domain is found at 111-285; the sequence is FETQPGYQLQ…TPEQRSRWSR (175 aa).

The protein belongs to the transposase IS21/IS408/IS1162 family.

Involved in the transposition of the insertion sequence. The sequence is that of Transposase for insertion sequence element IS640 (istA) from Shigella sonnei.